A 64-amino-acid polypeptide reads, in one-letter code: Large ribosomal subunit protein bL28 (64 aa).

Belongs to the bacterial ribosomal protein bL28 family.

The sequence is that of Large ribosomal subunit protein bL28 from Bifidobacterium adolescentis (strain ATCC 15703 / DSM 20083 / NCTC 11814 / E194a).